A 332-amino-acid polypeptide reads, in one-letter code: Cell division protein ZipA (332 aa).

At 1-6 (MMQDLR) the chain is on the periplasmic side. Residues 7-27 (LILIVVGAIAIIALLLHGLWT) traverse the membrane as a helical segment. Residues 28 to 332 (SRKERSSLFR…RLREVLENNA (305 aa)) are Cytoplasmic-facing. Composition is skewed to basic and acidic residues over residues 34–51 (SLFRDRPAKRSKKEREQS) and 61–72 (GEVRVRSAHPED). The segment at 34–184 (SLFRDRPAKR…PAVAHEPQPA (151 aa)) is disordered. The segment covering 98–107 (PAPRAVQPAA) has biased composition (low complexity). Positions 121–136 (DDILLDNYAQEEDDEP) are enriched in acidic residues. Positions 155–171 (PAAEPAFHAEPAHQPQP) are enriched in low complexity.

The protein belongs to the ZipA family. In terms of assembly, interacts with FtsZ via their C-terminal domains.

Its subcellular location is the cell inner membrane. Functionally, essential cell division protein that stabilizes the FtsZ protofilaments by cross-linking them and that serves as a cytoplasmic membrane anchor for the Z ring. Also required for the recruitment to the septal ring of downstream cell division proteins. In Serratia proteamaculans (strain 568), this protein is Cell division protein ZipA.